The primary structure comprises 491 residues: Probable polygalacturonase (491 aa).

The helical transmembrane segment at 15–35 (PIVSFYCFQVVSVLVAVVLLL) threads the bilayer. N-linked (GlcNAc...) asparagine glycosylation is found at Asn-165, Asn-175, and Asn-214. PbH1 repeat units follow at residues 230–256 (SRNI…NPDS), 257–278 (CTNT…AVKS), 319–340 (IQDV…RIKT), and 348–369 (VKDI…WMTG). The Proton donor role is filled by Asp-271. Residues Asn-399 and Asn-421 are each glycosylated (N-linked (GlcNAc...) asparagine).

This sequence belongs to the glycosyl hydrolase 28 family.

The protein localises to the membrane. It catalyses the reaction (1,4-alpha-D-galacturonosyl)n+m + H2O = (1,4-alpha-D-galacturonosyl)n + (1,4-alpha-D-galacturonosyl)m.. The polypeptide is Probable polygalacturonase (Vitis vinifera (Grape)).